The primary structure comprises 374 residues: Putative 2,3-diketo-5-methylthiopentyl-1-phosphate enolase (374 aa).

Substrate-binding positions include Lys-138, 164–167 (QDDE), His-255, Gly-327, and 349–350 (GG). Asp-166 is a binding site for Mg(2+).

This sequence belongs to the RuBisCO large chain family. Type IV subfamily. In terms of assembly, homodimer. Mg(2+) serves as cofactor.

It catalyses the reaction 5-methylsulfanyl-2,3-dioxopentyl phosphate = 2-hydroxy-5-methylsulfanyl-3-oxopent-1-enyl phosphate. It participates in amino-acid biosynthesis; L-methionine biosynthesis via salvage pathway; L-methionine from S-methyl-5-thio-alpha-D-ribose 1-phosphate: step 3/6. Catalyzes the enolization of 2,3-diketo-5-methylthiopentyl-1-phosphate (DK-MTP-1-P) into 2-hydroxy-3-keto-5-methylthiopentenyl-1-phosphate (HK-MTPenyl-1-P). The polypeptide is Putative 2,3-diketo-5-methylthiopentyl-1-phosphate enolase (mtnW) (Shouchella clausii (strain KSM-K16) (Alkalihalobacillus clausii)).